A 124-amino-acid chain; its full sequence is Large ribosomal subunit protein bL12 (124 aa).

Belongs to the bacterial ribosomal protein bL12 family. In terms of assembly, homodimer. Part of the ribosomal stalk of the 50S ribosomal subunit. Forms a multimeric L10(L12)X complex, where L10 forms an elongated spine to which 2 to 4 L12 dimers bind in a sequential fashion. Binds GTP-bound translation factors.

In terms of biological role, forms part of the ribosomal stalk which helps the ribosome interact with GTP-bound translation factors. Is thus essential for accurate translation. The chain is Large ribosomal subunit protein bL12 from Burkholderia cenocepacia (strain HI2424).